Reading from the N-terminus, the 243-residue chain is 1-(5-phosphoribosyl)-5-[(5-phosphoribosylamino)methylideneamino] imidazole-4-carboxamide isomerase (243 aa).

Asp-8 functions as the Proton acceptor in the catalytic mechanism. The active-site Proton donor is Asp-130.

Belongs to the HisA/HisF family.

The protein localises to the cytoplasm. It catalyses the reaction 1-(5-phospho-beta-D-ribosyl)-5-[(5-phospho-beta-D-ribosylamino)methylideneamino]imidazole-4-carboxamide = 5-[(5-phospho-1-deoxy-D-ribulos-1-ylimino)methylamino]-1-(5-phospho-beta-D-ribosyl)imidazole-4-carboxamide. It participates in amino-acid biosynthesis; L-histidine biosynthesis; L-histidine from 5-phospho-alpha-D-ribose 1-diphosphate: step 4/9. The polypeptide is 1-(5-phosphoribosyl)-5-[(5-phosphoribosylamino)methylideneamino] imidazole-4-carboxamide isomerase (Methylococcus capsulatus (strain ATCC 33009 / NCIMB 11132 / Bath)).